The chain runs to 559 residues: Serine/threonine-protein kinase bur1 (559 aa).

A Protein kinase domain is found at 40–341; the sequence is YEVLGKLGEG…AIDALNHPYF (302 aa). Residues 46–54 and K69 contribute to the ATP site; that span reads LGEGTFGEV. D171 (proton acceptor) is an active-site residue. Basic and acidic residues predominate over residues 359–372; the sequence is SHEFDRRKFQDRKA. The disordered stretch occupies residues 359–559; the sequence is SHEFDRRKFQ…GRDRDAYARR (201 aa). Residues 400-414 show a composition bias toward gly residues; it reads GRDGYGGGGRNGANG. Basic and acidic residues-rich tracts occupy residues 457–467, 491–534, and 543–559; these read DHTDGYRDRPP, YDRD…DSRT, and PVRD…YARR.

It belongs to the protein kinase superfamily. CMGC Ser/Thr protein kinase family. CDC2/CDKX subfamily.

The protein resides in the nucleus. The catalysed reaction is L-seryl-[protein] + ATP = O-phospho-L-seryl-[protein] + ADP + H(+). It catalyses the reaction L-threonyl-[protein] + ATP = O-phospho-L-threonyl-[protein] + ADP + H(+). It carries out the reaction [DNA-directed RNA polymerase] + ATP = phospho-[DNA-directed RNA polymerase] + ADP + H(+). Serine/threonine-protein kinase involved in transcription regulation. Phosphorylates the mus-8/ubc2 ubiquitin-conjugating enzyme (E2), leading to monoubiquitination of histone H2B and the silencing of telomeric-associated genes. Also required for histone H3 methylation. Necessary for the recovery from pheromone-induced growth arrest in the cell cycle G1 phase. In Neurospora crassa (strain ATCC 24698 / 74-OR23-1A / CBS 708.71 / DSM 1257 / FGSC 987), this protein is Serine/threonine-protein kinase bur1 (stk-1).